The primary structure comprises 447 residues: Serine/threonine-protein phosphatase 2A 55 kDa regulatory subunit B delta isoform (447 aa).

WD repeat units lie at residues 26 to 65 (AEAD…KNRP), 91 to 132 (EIEE…KRAE), 175 to 213 (AHTY…RSFN), 224 to 264 (ELTE…LCDR), 283 to 321 (EIIS…RPVE), 338 to 379 (ENDC…DITL), and 414 to 447 (DFNK…DKMN).

This sequence belongs to the phosphatase 2A regulatory subunit B family. As to quaternary structure, PP2A consists of a common heterodimeric core enzyme, composed of a 36 kDa catalytic subunit (subunit C) and a 65 kDa constant regulatory subunit (PR65 or subunit A), that associates with a variety of regulatory subunits.

It localises to the cytoplasm. Its function is as follows. Substrate-recognition subunit of protein phosphatase 2A (PP2A) that plays a key role in cell cycle by controlling mitosis entry and exit. The activity of PP2A complexes containing PPP2R2D (PR55-delta) fluctuate during the cell cycle: the activity is high in interphase and low in mitosis. The polypeptide is Serine/threonine-protein phosphatase 2A 55 kDa regulatory subunit B delta isoform (ppp2r2d) (Danio rerio (Zebrafish)).